Consider the following 158-residue polypeptide: Small ribosomal subunit protein uS15 (158 aa).

Over residues 1 to 18 (MARMHARKRGKSGSKRPP) the composition is skewed to basic residues. Positions 1 to 21 (MARMHARKRGKSGSKRPPRTA) are disordered.

This sequence belongs to the universal ribosomal protein uS15 family. Part of the 30S ribosomal subunit.

The protein is Small ribosomal subunit protein uS15 of Pyrococcus abyssi (strain GE5 / Orsay).